The primary structure comprises 126 residues: MAIRIVGVDLPQNKRGFIALTYIYGIGRSSAITILDKAGVDRDIKVKDWSDDQAAAIRDVIGAGYKVEGDLRSEVQLNIKRLMDIGCYRGIRHRIGLPLRGQSTKNNARTRKGKKKTVANKKKATK.

The disordered stretch occupies residues 99–126 (LRGQSTKNNARTRKGKKKTVANKKKATK). The segment covering 108 to 126 (ARTRKGKKKTVANKKKATK) has biased composition (basic residues).

It belongs to the universal ribosomal protein uS13 family. Part of the 30S ribosomal subunit. Forms a loose heterodimer with protein S19. Forms two bridges to the 50S subunit in the 70S ribosome.

Functionally, located at the top of the head of the 30S subunit, it contacts several helices of the 16S rRNA. In the 70S ribosome it contacts the 23S rRNA (bridge B1a) and protein L5 of the 50S subunit (bridge B1b), connecting the 2 subunits; these bridges are implicated in subunit movement. Contacts the tRNAs in the A and P-sites. The sequence is that of Small ribosomal subunit protein uS13 from Porphyromonas gingivalis (strain ATCC 33277 / DSM 20709 / CIP 103683 / JCM 12257 / NCTC 11834 / 2561).